The sequence spans 483 residues: UDP-N-acetylmuramate--L-alanine ligase (483 aa).

An ATP-binding site is contributed by 128–134 (GTHGKTT).

The protein belongs to the MurCDEF family.

It is found in the cytoplasm. It catalyses the reaction UDP-N-acetyl-alpha-D-muramate + L-alanine + ATP = UDP-N-acetyl-alpha-D-muramoyl-L-alanine + ADP + phosphate + H(+). It functions in the pathway cell wall biogenesis; peptidoglycan biosynthesis. Its function is as follows. Cell wall formation. The sequence is that of UDP-N-acetylmuramate--L-alanine ligase from Shewanella violacea (strain JCM 10179 / CIP 106290 / LMG 19151 / DSS12).